The sequence spans 193 residues: Cytidylate kinase (193 aa).

Position 12–20 (12–20) interacts with ATP; the sequence is GLAGSGTTT.

The protein belongs to the cytidylate kinase family. Type 2 subfamily.

The protein localises to the cytoplasm. The catalysed reaction is CMP + ATP = CDP + ADP. The enzyme catalyses dCMP + ATP = dCDP + ADP. This Thermococcus sibiricus (strain DSM 12597 / MM 739) protein is Cytidylate kinase.